A 454-amino-acid chain; its full sequence is Mitochondrial dynamics protein MID49 (454 aa).

Residues 1–22 (MAEFSQKRGKRRGDEGLGSMVD) are Mitochondrial intermembrane-facing. A helical membrane pass occupies residues 23–43 (FLLANARLVLGVGGAAVLGIA). At 44–454 (TLAVKRFIDR…SGLQEPEGLL (411 aa)) the chain is on the cytoplasmic side. Residues 76-119 (ATPHLQPRPPPAALSQPVLPLAPSSSAPEGPAKSDPEVTPQLSS) form a disordered region. Low complexity predominate over residues 88-108 (ALSQPVLPLAPSSSAPEGPAK).

It belongs to the MID49/MID51 family. In terms of assembly, interacts with DNM1L.

Its subcellular location is the mitochondrion outer membrane. Mitochondrial outer membrane protein which regulates mitochondrial organization. It is required for mitochondrial fission and promotes the recruitment and association of the fission mediator dynamin-related protein 1 (DNM1L) to the mitochondrial surface independently of the mitochondrial fission FIS1 and MFF proteins. Regulates DNM1L GTPase activity. This chain is Mitochondrial dynamics protein MID49 (MIEF2), found in Pongo abelii (Sumatran orangutan).